Reading from the N-terminus, the 530-residue chain is Autoinducer-2 kinase (530 aa).

It belongs to the FGGY kinase family.

It localises to the cytoplasm. The catalysed reaction is (S)-4,5-dihydroxypentane-2,3-dione + ATP = (2S)-2-hydroxy-3,4-dioxopentyl phosphate + ADP + H(+). Catalyzes the phosphorylation of autoinducer-2 (AI-2) to phospho-AI-2, which subsequently inactivates the transcriptional regulator LsrR and leads to the transcription of the lsr operon. Phosphorylates the ring-open form of (S)-4,5-dihydroxypentane-2,3-dione (DPD), which is the precursor to all AI-2 signaling molecules, at the C5 position. The protein is Autoinducer-2 kinase of Salmonella paratyphi A (strain ATCC 9150 / SARB42).